Consider the following 213-residue polypeptide: Nucleoside triphosphate pyrophosphatase (213 aa).

D77 serves as the catalytic Proton acceptor.

The protein belongs to the Maf family. Requires a divalent metal cation as cofactor.

Its subcellular location is the cytoplasm. It carries out the reaction a ribonucleoside 5'-triphosphate + H2O = a ribonucleoside 5'-phosphate + diphosphate + H(+). It catalyses the reaction a 2'-deoxyribonucleoside 5'-triphosphate + H2O = a 2'-deoxyribonucleoside 5'-phosphate + diphosphate + H(+). Nucleoside triphosphate pyrophosphatase. May have a dual role in cell division arrest and in preventing the incorporation of modified nucleotides into cellular nucleic acids. The chain is Nucleoside triphosphate pyrophosphatase from Cutibacterium acnes (strain DSM 16379 / KPA171202) (Propionibacterium acnes).